A 431-amino-acid polypeptide reads, in one-letter code: 2-oxoisovalerate dehydrogenase subunit alpha, mitochondrial (431 aa).

140 to 142 provides a ligand contact to thiamine diphosphate; the sequence is QYR. K(+) contacts are provided by Ser-189, Thr-194, and Gln-195.

This sequence belongs to the BCKDHA family. The cofactor is thiamine diphosphate.

Its subcellular location is the mitochondrion matrix. It catalyses the reaction N(6)-[(R)-lipoyl]-L-lysyl-[protein] + 3-methyl-2-oxobutanoate + H(+) = N(6)-[(R)-S(8)-2-methylpropanoyldihydrolipoyl]-L-lysyl-[protein] + CO2. It participates in lipid metabolism; fatty acid biosynthesis. The branched-chain alpha-keto dehydrogenase complex catalyzes the overall conversion of alpha-keto acids to acyl-CoA and CO(2). It contains multiple copies of three enzymatic components: branched-chain alpha-keto acid decarboxylase (E1), lipoamide acyltransferase (E2) and lipoamide dehydrogenase (E3). Required for the production of the monomethyl branched-chain fatty acids (mmBCFAs) isopentadecanoate (C15iso) and isoheptadecanoate (C17iso). This chain is 2-oxoisovalerate dehydrogenase subunit alpha, mitochondrial, found in Caenorhabditis elegans.